A 142-amino-acid chain; its full sequence is ATP synthase epsilon chain (142 aa).

The protein belongs to the ATPase epsilon chain family. As to quaternary structure, F-type ATPases have 2 components, CF(1) - the catalytic core - and CF(0) - the membrane proton channel. CF(1) has five subunits: alpha(3), beta(3), gamma(1), delta(1), epsilon(1). CF(0) has three main subunits: a, b and c.

The protein localises to the cell inner membrane. Functionally, produces ATP from ADP in the presence of a proton gradient across the membrane. This chain is ATP synthase epsilon chain, found in Shewanella piezotolerans (strain WP3 / JCM 13877).